The sequence spans 527 residues: Eukaryotic translation initiation factor 2 subunit gamma (527 aa).

Residues 1–83 form a disordered region; that stretch reads MSDLQDQEPS…GLPEQPLNPD (83 aa). A Phosphothreonine modification is found at T60. Residues 98 to 307 form the tr-type G domain; that stretch reads QATINIGTIG…IVKTIPVPPR (210 aa). The G1 stretch occupies residues 107–114; that stretch reads GHVAHGKS. 110–115 provides a ligand contact to GTP; it reads AHGKST. The interval 135–139 is G2; it reads NITIK. The interval 193–196 is G3; that stretch reads DCPG. 249–252 contacts GTP; that stretch reads NKVD. Positions 249-252 are G4; sequence NKVD. S258 is subject to Phosphoserine. 284-286 serves as a coordination point for GTP; the sequence is SAQ. The interval 284 to 286 is G5; sequence SAQ. Residues 515–527 form an interacts with CDC123 region; it reads ATIKKGTTLEPIA.

This sequence belongs to the TRAFAC class translation factor GTPase superfamily. Classic translation factor GTPase family. EIF2G subfamily. Eukaryotic translation initiation factor 2 eIF2 is a heterotrimeric complex composed of an alpha, a beta and a gamma subunit. The factors eIF-1, eIF-1A, eIF-2, eIF-3, TIF5/eIF-5 and methionyl-tRNAi form a multifactor complex (MFC) that may bind to the 40S ribosome. Interacts (via C-terminus) with CDC123; the interaction is direct. Interacts with GCD1. Interacts with the eIF2B complex subunits GCD6 and GCD7. Interacts with methionyl-initiator methionine tRNA.

It localises to the cytoplasm. The protein localises to the cytosol. It carries out the reaction GTP + H2O = GDP + phosphate + H(+). Its function is as follows. As a subunit of eukaryotic initiation factor 2 eIF2, involved in the early steps of protein synthesis. In the presence of GTP, eIF-2 forms a ternary complex with initiator tRNA Met-tRNAi and then recruits the 40S ribosomal complex and initiation factors eIF-1, eIF-1A and eIF-3 to form the 43S pre-initiation complex (43S PIC), a step that determines the rate of protein translation. The 43S PIC binds to mRNA and scans downstream to the initiation codon, where it forms a 48S initiation complex by codon-anticodon base pairing. This leads to the displacement of eIF-1 to allow GTPase-activating protein (GAP) eIF-5-mediated hydrolysis of eIF2-bound GTP. Hydrolysis of GTP and release of Pi, which makes GTP hydrolysis irreversible, causes the release of the eIF-2-GDP binary complex from the 40S subunit, an event that is essential for the subsequent joining of the 60S ribosomal subunit to form an elongation-competent 80S ribosome. In order for eIF-2 to recycle and catalyze another round of initiation, the GDP bound to eIF-2 must be exchanged with GTP by way of a reaction catalyzed by GDP-GTP exchange factor (GEF) eIF-2B. In Saccharomyces cerevisiae (strain ATCC 204508 / S288c) (Baker's yeast), this protein is Eukaryotic translation initiation factor 2 subunit gamma (GCD11).